A 2779-amino-acid chain; its full sequence is Protein lava lamp (2779 aa).

Disordered regions lie at residues 31–62, 79–98, and 110–135; these read LAGS…DSLK, ALRK…SMES, and KTRS…VSLL. Over residues 33–51 the composition is skewed to polar residues; sequence GSSNDLSSLQNVSASTTRG. Ser34 and Ser35 each carry phosphoserine. Positions 52 to 85 form a coiled coil; it reads TKGKGRLDSLKENLYKQQERLTALKERALRKSQD. A compositionally biased stretch (basic and acidic residues) spans 79–91; sequence ALRKSQDERHKSS. A phosphoserine mark is found at Ser95, Ser98, Ser122, and Ser133. Residues 141–175 adopt a coiled-coil conformation; sequence EKLLMLTQRTEQNRALLEQRKRDLAKSLLSVKSNI. 3 positions are modified to phosphoserine: Ser186, Ser352, and Ser354. Coiled coils occupy residues 220-607 and 659-716; these read ESRV…AESI and GETL…KDLI. Positions 337–352 are enriched in basic and acidic residues; the sequence is ERQRNLELEQEQEKAS. Disordered regions lie at residues 337 to 366, 622 to 662, 711 to 730, and 1716 to 1753; these read ERQR…DAQV, RPAS…GETL, REKD…QELS, and QAQL…GGDA. Low complexity-rich tracts occupy residues 717 to 730 and 1716 to 1740; these read SSTS…QELS and QAQL…QSQQ. Coiled coils occupy residues 751 to 1733, 1785 to 1863, and 1941 to 2433; these read LFEK…QHHH, TIED…KLIQ, and NEAP…QSQN. 4 disordered regions span residues 2348–2367, 2484–2507, 2552–2578, and 2633–2665; these read EDKE…GETV, EEVT…EATS, NRGG…TANE, and TERS…AGSN. Over residues 2488–2502 the composition is skewed to low complexity; it reads QQQQRELPQSQQSTQ. A coiled-coil region spans residues 2504–2544; the sequence is EATSDIMQKMQKALETQEMEIVTLKEQLAIRSAEYARLAAQ. Residues 2600–2641 adopt a coiled-coil conformation; the sequence is DMRVEEMIVELVQLLEERDHLQLKLSDTLRQLETERSRVSDE. Residues 2643 to 2665 are compositionally biased toward low complexity; the sequence is SATASSSAASSSSPSKISSAGSN.

Interacts with CLIP-190 and spectrin separately.

Its subcellular location is the golgi apparatus. It is found in the cytoplasmic vesicle. The protein localises to the autophagosome. In terms of biological role, lva and spectrin may form a Golgi-based scaffold that mediates interaction of Golgi bodies with microtubules and facilitates Golgi-derived membrane secretion required for the formation of furrows during cellularization. Under starvation conditions recruited by ema to developing autophagsosomes where it may function in autophagosome growth. In Drosophila melanogaster (Fruit fly), this protein is Protein lava lamp (lva).